The following is a 254-amino-acid chain: UPF0328 protein ECU01_0070/ECU01_1540/ECU02_1570/ECU04_0080/ECU08_2100 (254 aa).

Belongs to the UPF0328 family.

The protein is UPF0328 protein ECU01_0070/ECU01_1540/ECU02_1570/ECU04_0080/ECU08_2100 of Encephalitozoon cuniculi (strain GB-M1) (Microsporidian parasite).